The chain runs to 1480 residues: Nonribosomal peptide synthetase inpA (1480 aa).

A compositionally biased stretch (low complexity) spans 1–17 (MSHSMSSSSSSSSSSSS). The tract at residues 1 to 24 (MSHSMSSSSSSSSSSSSSRDEGQS) is disordered. Residues 44–458 (VQDVYPCTPL…QLISPQDLDQ (415 aa)) are condensation. An adenylation region spans residues 479 to 871 (QRHIDTRPDA…GRKDSQVKIR (393 aa)). The region spanning 1003-1082 (DSTNKVALRL…GLAAMITSPH (80 aa)) is the Carrier domain. At Ser1041 the chain carries O-(pantetheine 4'-phosphoryl)serine. The interval 1117–1436 (KVFLTGATGL…VLAMLQDPQM (320 aa)) is thioesterase (TE) domain.

The protein belongs to the NRP synthetase family.

Its pathway is secondary metabolite biosynthesis. In terms of biological role, nonribosomal peptide synthetase; part of the inp gene cluster that mediates the biosynthesis of fellutamide B, a mycotoxin that acts as a proteasome inhibitor. In the first step of fellutabmide B biosynthesis, inpC activates 3-hydroxydodecanoic acid to generate 3-hydroxydodecanoyl-AMP that is then loaded onto the T0 domain of inpB. The 3-hydroxydodecanoyl-S-phosphopantetheinyl-T0 is sequentially extended with L-Asn and L-Gln by the two CAT modules of inpB. The linear lipodipeptide from inpB is then transferred onto inpA for the addition of the third amino acid, L-Leu. Reductive releasing of the lipotripeptide by the TE domain of inpA produces (2S)-fellutamide B. InpF might be involved in the release and transfer of the lipodipeptide from inpB to inpA. The inp cluster-encoded proteasome subunit inpE confers resistance to internally produced fellutamides. The MFS efflux transporter inpD may contribute to fellutamide resistance as well. The polypeptide is Nonribosomal peptide synthetase inpA (Emericella nidulans (strain FGSC A4 / ATCC 38163 / CBS 112.46 / NRRL 194 / M139) (Aspergillus nidulans)).